A 414-amino-acid chain; its full sequence is Nuclear hormone receptor family member nhr-213 (414 aa).

The nuclear receptor DNA-binding region spans 21-99 (IVLCKVCALS…LGMTPENVQF (79 aa)). 2 NR C4-type zinc fingers span residues 24-44 (CKVC…CRAC) and 62-82 (CKKG…CRLC). Residues 162–414 (SAAKKMNSLE…DFSDPDIFDC (253 aa)) form the NR LBD domain.

The protein belongs to the nuclear hormone receptor family.

It localises to the nucleus. Functionally, orphan nuclear receptor. The polypeptide is Nuclear hormone receptor family member nhr-213 (nhr-213) (Caenorhabditis elegans).